We begin with the raw amino-acid sequence, 223 residues long: Deoxyribose-phosphate aldolase 1 (223 aa).

Asp91 (proton donor/acceptor) is an active-site residue. Lys154 (schiff-base intermediate with acetaldehyde) is an active-site residue. Lys183 acts as the Proton donor/acceptor in catalysis.

The protein belongs to the DeoC/FbaB aldolase family. DeoC type 1 subfamily.

It localises to the cytoplasm. The catalysed reaction is 2-deoxy-D-ribose 5-phosphate = D-glyceraldehyde 3-phosphate + acetaldehyde. It functions in the pathway carbohydrate degradation; 2-deoxy-D-ribose 1-phosphate degradation; D-glyceraldehyde 3-phosphate and acetaldehyde from 2-deoxy-alpha-D-ribose 1-phosphate: step 2/2. Its function is as follows. Catalyzes a reversible aldol reaction between acetaldehyde and D-glyceraldehyde 3-phosphate to generate 2-deoxy-D-ribose 5-phosphate. In Bacillus licheniformis (strain ATCC 14580 / DSM 13 / JCM 2505 / CCUG 7422 / NBRC 12200 / NCIMB 9375 / NCTC 10341 / NRRL NRS-1264 / Gibson 46), this protein is Deoxyribose-phosphate aldolase 1.